The sequence spans 374 residues: Alanine racemase (374 aa).

The active-site Proton acceptor; specific for D-alanine is the lysine 35. At lysine 35 the chain carries N6-(pyridoxal phosphate)lysine. Arginine 130 lines the substrate pocket. Tyrosine 253 acts as the Proton acceptor; specific for L-alanine in catalysis. Methionine 305 is a binding site for substrate.

The protein belongs to the alanine racemase family. It depends on pyridoxal 5'-phosphate as a cofactor.

It catalyses the reaction L-alanine = D-alanine. The protein operates within amino-acid biosynthesis; D-alanine biosynthesis; D-alanine from L-alanine: step 1/1. In terms of biological role, catalyzes the interconversion of L-alanine and D-alanine. May also act on other amino acids. The protein is Alanine racemase (alr) of Ralstonia pickettii (strain 12J).